The following is a 331-amino-acid chain: tRNA uridine(34) hydroxylase (331 aa).

A Rhodanese domain is found at 123-217 (TDPEVLLIDT…YLEDVPQEES (95 aa)). Cys-177 (cysteine persulfide intermediate) is an active-site residue. A disordered region spans residues 293–331 (KSRGEEHIGSEAAKAIKKRQAEKKLKRKNYHQHLTQGAE). The span at 307-323 (AIKKRQAEKKLKRKNYH) shows a compositional bias: basic residues.

This sequence belongs to the TrhO family.

It catalyses the reaction uridine(34) in tRNA + AH2 + O2 = 5-hydroxyuridine(34) in tRNA + A + H2O. In terms of biological role, catalyzes oxygen-dependent 5-hydroxyuridine (ho5U) modification at position 34 in tRNAs. The protein is tRNA uridine(34) hydroxylase of Hahella chejuensis (strain KCTC 2396).